The sequence spans 1037 residues: Receptor kinase-like protein Xa21 (1037 aa).

An N-terminal signal peptide occupies residues 1-24; that stretch reads MARSPTSVMISSLLLLLLIGPASS. The Extracellular portion of the chain corresponds to 25-665; it reads DDAAAAAAAR…LLENRKHFPV (641 aa). Residues N66, N101, and N112 are each glycosylated (N-linked (GlcNAc...) asparagine). LRR repeat units lie at residues 89 to 112, 113 to 137, 138 to 161, 163 to 185, 187 to 210, 211 to 234, 236 to 259, 260 to 283, 285 to 308, 310 to 331, and 333 to 355; these read PHRV…SLGN, LSFL…LSRL, SRLQ…IGAC, KLTS…IGAS, KHLS…LGNL, TSLQ…LGQL, SSLL…IWNL, SSLR…AFKT, HLLE…VANA, HLTQ…GFGR, and RNLT…DWGF. An N-linked (GlcNAc...) asparagine glycan is attached at N209. N-linked (GlcNAc...) asparagine glycosylation is found at N247 and N258. N-linked (GlcNAc...) asparagine glycosylation occurs at N307. 3 N-linked (GlcNAc...) asparagine glycosylation sites follow: N334, N361, and N385. LRR repeat units follow at residues 362 to 385, 387 to 411, 412 to 435, 437 to 459, 460 to 482, 483 to 507, 509 to 532, 533 to 556, 557 to 580, 581 to 604, and 606 to 629; these read CSKL…SFSN, STSL…IGNL, IGLQ…LGRL, NLGI…IGNL, TELN…TLSN, LTNL…LFNI, TLSI…IGHL, KNLV…LGDC, QLLR…LGQL, KGLE…LADI, and MLHS…AFAD. Residues N447, N458, N482, N495, and N515 are each glycosylated (N-linked (GlcNAc...) asparagine). N-linked (GlcNAc...) asparagine glycosylation is found at N592 and N611. The helical transmembrane segment at 666–686 threads the bilayer; that stretch reads LPISVSLVAALAILSSLYLLI. The Cytoplasmic portion of the chain corresponds to 687–1037; it reads TWHKRTKKGA…PVCEGASLEF (351 aa). Positions 689–694 match the Nuclear localization signal motif; the sequence is HKRTKK. Phosphoserine is present on S698. T700 bears the Phosphothreonine mark. S701 is subject to Phosphoserine. The residue at position 717 (T717) is a Phosphothreonine. Residues 720–1019 form the Protein kinase domain; sequence FAPTNLLGSG…GDIIDELNAI (300 aa). ATP contacts are provided by residues 726-734 and K748; that span reads LGSGSFGSV. The Proton acceptor role is filled by D854.

The protein belongs to the protein kinase superfamily. Ser/Thr protein kinase family. As to quaternary structure, interacts with WRKY62/XB10 in the nucleus. Interacts with SERK2. The cofactor is Mn(2+). Mg(2+) serves as cofactor. Post-translationally, undergoes protein cleavage upon X.oryzae pv. oryzae protein Ax21 detection, thus releasing the processed protein kinase Xa21 chain. In terms of processing, autophosphorylated on serine and threonine residues; these phosphorylation prevents proteolytic degradation.

The protein localises to the cell membrane. It is found in the endoplasmic reticulum membrane. The protein resides in the nucleus. The catalysed reaction is L-seryl-[protein] + ATP = O-phospho-L-seryl-[protein] + ADP + H(+). It carries out the reaction L-threonyl-[protein] + ATP = O-phospho-L-threonyl-[protein] + ADP + H(+). Receptor kinase that detects X.oryzae pv. oryzae protein Ax21 to promote innate immunity. Following X.oryzae pv. oryzae protein Ax21 detection, undergoes cleavage, releasing the processed protein kinase Xa21 chain. In terms of biological role, the processed protein kinase Xa21 chain released by protein cleavage after X.oryzae pv. oryzae protein Ax21 detection translocates into the nucleus where it can bind and regulate WRKY62, a transcription factor. Confers resistance to the bacterial pathogen X.oryzae pv. oryzae (Xoo). The protein is Receptor kinase-like protein Xa21 of Oryza sativa subsp. japonica (Rice).